Here is a 352-residue protein sequence, read N- to C-terminus: Probable dual-specificity RNA methyltransferase RlmN (352 aa).

E99 acts as the Proton acceptor in catalysis. Residues 105 to 325 enclose the Radical SAM core domain; it reads EGDRATLCIS…ESHGYTCTIR (221 aa). C112 and C336 form a disulfide bridge. [4Fe-4S] cluster-binding residues include C119, C123, and C126. Residues 164–165, S196, 217–219, and H293 each bind S-adenosyl-L-methionine; these read GE and SLH. C336 acts as the S-methylcysteine intermediate in catalysis.

This sequence belongs to the radical SAM superfamily. RlmN family. [4Fe-4S] cluster is required as a cofactor.

It localises to the cytoplasm. It carries out the reaction adenosine(2503) in 23S rRNA + 2 reduced [2Fe-2S]-[ferredoxin] + 2 S-adenosyl-L-methionine = 2-methyladenosine(2503) in 23S rRNA + 5'-deoxyadenosine + L-methionine + 2 oxidized [2Fe-2S]-[ferredoxin] + S-adenosyl-L-homocysteine. The catalysed reaction is adenosine(37) in tRNA + 2 reduced [2Fe-2S]-[ferredoxin] + 2 S-adenosyl-L-methionine = 2-methyladenosine(37) in tRNA + 5'-deoxyadenosine + L-methionine + 2 oxidized [2Fe-2S]-[ferredoxin] + S-adenosyl-L-homocysteine. Specifically methylates position 2 of adenine 2503 in 23S rRNA and position 2 of adenine 37 in tRNAs. The polypeptide is Probable dual-specificity RNA methyltransferase RlmN (Porphyromonas gingivalis (strain ATCC 33277 / DSM 20709 / CIP 103683 / JCM 12257 / NCTC 11834 / 2561)).